A 109-amino-acid chain; its full sequence is Nucleoid-associated protein BCE_0021 (109 aa).

It belongs to the YbaB/EbfC family. In terms of assembly, homodimer.

It is found in the cytoplasm. It localises to the nucleoid. Functionally, binds to DNA and alters its conformation. May be involved in regulation of gene expression, nucleoid organization and DNA protection. The sequence is that of Nucleoid-associated protein BCE_0021 from Bacillus cereus (strain ATCC 10987 / NRS 248).